The following is a 266-amino-acid chain: MTFPAGAYVLRKVFIPHGCPLIFRLLLAVICLSVPSFACPKSCHCSERNSLTVVQCSSRNLEEIPPDLPHDTVSLQLSSNHITKIPNQAFKNLPWLQELDLSRNAIETVDAGAFKGVSESLRTLDLSHNHMQGVPKEAFARLHAKISLSNNPWHCECTLQEVLRELRLDPETVNEVSCHTSDQEKYAGKPVIQVLDSGINFCNFHHKTTDVAMFVTMFGWFTMVIAYVIYYVRHNQEDARRHLEYLKSLPSSSQISKDFDTISTVL.

The signal sequence occupies residues 1-38 (MTFPAGAYVLRKVFIPHGCPLIFRLLLAVICLSVPSFA). Positions 39 to 70 (CPKSCHCSERNSLTVVQCSSRNLEEIPPDLPH) constitute an LRRNT domain. LRR repeat units follow at residues 71-92 (DTVS…AFKN), 95-116 (WLQE…AFKG), and 120-141 (SLRT…AFAR). The region spanning 151 to 204 (NPWHCECTLQEVLRELRLDPETVNEVSCHTSDQEKYAGKPVIQVLDSGINFCNF) is the LRRCT domain. A helical membrane pass occupies residues 211-231 (VAMFVTMFGWFTMVIAYVIYY).

It belongs to the LRRC3 family.

It localises to the membrane. This Danio rerio (Zebrafish) protein is Leucine-rich repeat-containing protein 3 (lrrc3).